The primary structure comprises 445 residues: Methylthioribose-1-phosphate isomerase (445 aa).

D286 functions as the Proton donor in the catalytic mechanism.

This sequence belongs to the eIF-2B alpha/beta/delta subunits family. MtnA subfamily.

It is found in the cytoplasm. Its subcellular location is the nucleus. The catalysed reaction is 5-(methylsulfanyl)-alpha-D-ribose 1-phosphate = 5-(methylsulfanyl)-D-ribulose 1-phosphate. The protein operates within amino-acid biosynthesis; L-methionine biosynthesis via salvage pathway; L-methionine from S-methyl-5-thio-alpha-D-ribose 1-phosphate: step 1/6. Its function is as follows. Catalyzes the interconversion of methylthioribose-1-phosphate (MTR-1-P) into methylthioribulose-1-phosphate (MTRu-1-P). The polypeptide is Methylthioribose-1-phosphate isomerase (mri1) (Sclerotinia sclerotiorum (strain ATCC 18683 / 1980 / Ss-1) (White mold)).